The sequence spans 156 residues: Succinate dehydrogenase assembly factor 2-B, mitochondrial (156 aa).

Residues Met1 to Leu24 constitute a mitochondrion transit peptide.

The protein belongs to the SDHAF2 family. In terms of assembly, interacts with the flavoprotein subunit within the SDH catalytic dimer.

The protein localises to the mitochondrion matrix. Plays an essential role in the assembly of succinate dehydrogenase (SDH), an enzyme complex (also referred to as respiratory complex II) that is a component of both the tricarboxylic acid (TCA) cycle and the mitochondrial electron transport chain, and which couples the oxidation of succinate to fumarate with the reduction of ubiquinone (coenzyme Q) to ubiquinol. Required for flavinylation (covalent attachment of FAD) of the flavoprotein subunit of the SDH catalytic dimer. The protein is Succinate dehydrogenase assembly factor 2-B, mitochondrial of Drosophila simulans (Fruit fly).